The sequence spans 311 residues: Mycinamicin-resistance protein MyrB (311 aa).

S-adenosyl-L-methionine contacts are provided by asparagine 27, leucine 29, glycine 54, glutamate 75, and aspartate 98. Residues 272 to 311 (PAPAGRSVRARPGSVGPDRSLPPRGLRSGPPRARRRGGGA) are disordered. Residues 293 to 302 (PPRGLRSGPP) show a composition bias toward low complexity.

Belongs to the class I-like SAM-binding methyltransferase superfamily. rRNA adenine N(6)-methyltransferase family.

Confers resistance to macrolide, lincosamide and streptogramin B antibiotics. This Micromonospora griseorubida protein is Mycinamicin-resistance protein MyrB (myrB).